Here is a 346-residue protein sequence, read N- to C-terminus: Dihydroorotase (346 aa).

Positions 17 and 19 each coordinate Zn(2+). Residues 19–21 (HVR) and asparagine 45 each bind substrate. Zn(2+) contacts are provided by lysine 102, histidine 139, and histidine 177. Position 102 is an N6-carboxylysine (lysine 102). Histidine 139 provides a ligand contact to substrate. Position 222 (leucine 222) interacts with substrate. Zn(2+) is bound at residue aspartate 250. Aspartate 250 is an active-site residue. Residues histidine 254 and alanine 266 each coordinate substrate.

It belongs to the metallo-dependent hydrolases superfamily. DHOase family. Class II DHOase subfamily. In terms of assembly, homodimer. The cofactor is Zn(2+).

The catalysed reaction is (S)-dihydroorotate + H2O = N-carbamoyl-L-aspartate + H(+). Its pathway is pyrimidine metabolism; UMP biosynthesis via de novo pathway; (S)-dihydroorotate from bicarbonate: step 3/3. In terms of biological role, catalyzes the reversible cyclization of carbamoyl aspartate to dihydroorotate. The polypeptide is Dihydroorotase (Delftia acidovorans (strain DSM 14801 / SPH-1)).